The following is a 348-amino-acid chain: Histidinol-phosphate aminotransferase (348 aa).

Residue Lys-207 is modified to N6-(pyridoxal phosphate)lysine.

It belongs to the class-II pyridoxal-phosphate-dependent aminotransferase family. Histidinol-phosphate aminotransferase subfamily. In terms of assembly, homodimer. The cofactor is pyridoxal 5'-phosphate.

The catalysed reaction is L-histidinol phosphate + 2-oxoglutarate = 3-(imidazol-4-yl)-2-oxopropyl phosphate + L-glutamate. It functions in the pathway amino-acid biosynthesis; L-histidine biosynthesis; L-histidine from 5-phospho-alpha-D-ribose 1-diphosphate: step 7/9. The polypeptide is Histidinol-phosphate aminotransferase (Crocosphaera subtropica (strain ATCC 51142 / BH68) (Cyanothece sp. (strain ATCC 51142))).